Reading from the N-terminus, the 335-residue chain is Glycerol-3-phosphate dehydrogenase [NAD(P)+] (335 aa).

Residues Ser10, Phe11, Arg31, and Lys105 each coordinate NADPH. Residues Lys105, Gly136, and Ser138 each contribute to the sn-glycerol 3-phosphate site. Ala140 serves as a coordination point for NADPH. The sn-glycerol 3-phosphate site is built by Lys191, Asp244, Ser254, Arg255, and Asn256. Catalysis depends on Lys191, which acts as the Proton acceptor. Arg255 contributes to the NADPH binding site. Positions 279 and 281 each coordinate NADPH.

The protein belongs to the NAD-dependent glycerol-3-phosphate dehydrogenase family.

Its subcellular location is the cytoplasm. It carries out the reaction sn-glycerol 3-phosphate + NAD(+) = dihydroxyacetone phosphate + NADH + H(+). It catalyses the reaction sn-glycerol 3-phosphate + NADP(+) = dihydroxyacetone phosphate + NADPH + H(+). It participates in membrane lipid metabolism; glycerophospholipid metabolism. Catalyzes the reduction of the glycolytic intermediate dihydroxyacetone phosphate (DHAP) to sn-glycerol 3-phosphate (G3P), the key precursor for phospholipid synthesis. In Leptospira interrogans serogroup Icterohaemorrhagiae serovar Lai (strain 56601), this protein is Glycerol-3-phosphate dehydrogenase [NAD(P)+].